The chain runs to 496 residues: Glutamyl-tRNA(Gln) amidotransferase subunit A (496 aa).

Active-site charge relay system residues include Lys75 and Ser150. Ser174 (acyl-ester intermediate) is an active-site residue.

The protein belongs to the amidase family. GatA subfamily. Heterotrimer of A, B and C subunits.

It carries out the reaction L-glutamyl-tRNA(Gln) + L-glutamine + ATP + H2O = L-glutaminyl-tRNA(Gln) + L-glutamate + ADP + phosphate + H(+). Allows the formation of correctly charged Gln-tRNA(Gln) through the transamidation of misacylated Glu-tRNA(Gln) in organisms which lack glutaminyl-tRNA synthetase. The reaction takes place in the presence of glutamine and ATP through an activated gamma-phospho-Glu-tRNA(Gln). The chain is Glutamyl-tRNA(Gln) amidotransferase subunit A from Burkholderia pseudomallei (strain 668).